Here is a 362-residue protein sequence, read N- to C-terminus: MPGNSFGQLFKITTFGESHGPSLGAVVDGCPAGLELTEADLQEALDRRKPGQNRYTTARREADQVKILSGVFEGVTTGTSIGLLIENTDQRSQDYSDIKDTFRPGHADYTYQHKYGVRDYRGGGRSSARETAMRVAAGAIADKLLRQQGIQVQAALTQMGDVVASNIDWQQVRENELFCGDANAVEAMQELIRQLKKEGDSIGAKIRVQATGVPPGWGEPVFDRLDADLAKALMSINAVKAVSVGDGFEVVSQRGSEHRDEMTPDGFLSNHAGGVLGGISSGQPIFADIALKPTSSIAISGRTIDRWGNEQAIVTKGRHDPCVGIRAVPIVEAMTSLVLADHWLRQRAHNLTAQTETPDISR.

NADP(+) is bound by residues Arg48 and Arg54. FMN-binding positions include 125-127, 237-238, Gly277, 292-296, and Arg318; these read RSS, NA, and KPTSS.

It belongs to the chorismate synthase family. In terms of assembly, homotetramer. Requires FMNH2 as cofactor.

It carries out the reaction 5-O-(1-carboxyvinyl)-3-phosphoshikimate = chorismate + phosphate. Its pathway is metabolic intermediate biosynthesis; chorismate biosynthesis; chorismate from D-erythrose 4-phosphate and phosphoenolpyruvate: step 7/7. In terms of biological role, catalyzes the anti-1,4-elimination of the C-3 phosphate and the C-6 proR hydrogen from 5-enolpyruvylshikimate-3-phosphate (EPSP) to yield chorismate, which is the branch point compound that serves as the starting substrate for the three terminal pathways of aromatic amino acid biosynthesis. This reaction introduces a second double bond into the aromatic ring system. In Idiomarina loihiensis (strain ATCC BAA-735 / DSM 15497 / L2-TR), this protein is Chorismate synthase.